We begin with the raw amino-acid sequence, 141 residues long: Large ribosomal subunit protein uL11 (141 aa).

It belongs to the universal ribosomal protein uL11 family. As to quaternary structure, part of the ribosomal stalk of the 50S ribosomal subunit. Interacts with L10 and the large rRNA to form the base of the stalk. L10 forms an elongated spine to which L12 dimers bind in a sequential fashion forming a multimeric L10(L12)X complex. One or more lysine residues are methylated.

Forms part of the ribosomal stalk which helps the ribosome interact with GTP-bound translation factors. This chain is Large ribosomal subunit protein uL11, found in Phytoplasma australiense.